The chain runs to 76 residues: Omega-agatoxin-Aa3b (76 aa).

6 cysteine pairs are disulfide-bonded: Cys2–Cys19, Cys9–Cys25, Cys16–Cys52, Cys18–Cys40, Cys27–Cys38, and Cys59–Cys67.

The protein belongs to the neurotoxin 04 (omega-agtx) family. 03 (type II/III omega-agtx) subfamily. In terms of tissue distribution, expressed by the venom gland.

The protein resides in the secreted. In terms of biological role, omega-agatoxins are antagonists of voltage-gated calcium channels. This toxin blocks calcium channels in insect central neurons but not at peripheral neuromuscular junctions. In vertebrates, it is broadly active against all high-threshold Cav1/CACNA1 channels and Cav2.2/CACNA1B channels. This Agelenopsis aperta (North American funnel-web spider) protein is Omega-agatoxin-Aa3b.